We begin with the raw amino-acid sequence, 393 residues long: S-adenosylmethionine synthase (393 aa).

E9 lines the Mg(2+) pocket. H15 lines the ATP pocket. D17 is a Mg(2+) binding site. E43 contributes to the K(+) binding site. L-methionine is bound by residues E56 and Q99. ATP is bound by residues 167–169 (DGK), 235–238 (SGRF), D246, 252–253 (RK), A269, K273, and K277. D246 provides a ligand contact to L-methionine. K277 provides a ligand contact to L-methionine.

This sequence belongs to the AdoMet synthase family. In terms of assembly, homotetramer; dimer of dimers. Mn(2+) is required as a cofactor. Requires Mg(2+) as cofactor. It depends on Co(2+) as a cofactor. The cofactor is K(+).

The protein localises to the cytoplasm. The enzyme catalyses L-methionine + ATP + H2O = S-adenosyl-L-methionine + phosphate + diphosphate. It participates in amino-acid biosynthesis; S-adenosyl-L-methionine biosynthesis; S-adenosyl-L-methionine from L-methionine: step 1/1. With respect to regulation, increased activity in the presence of 25 percent acetonitrile, methanol or dimethylformamide. Functionally, catalyzes the formation of S-adenosylmethionine from methionine and ATP. The polypeptide is S-adenosylmethionine synthase (Acacia koa (Koa tree)).